A 591-amino-acid polypeptide reads, in one-letter code: Aspartate--tRNA(Asp/Asn) ligase (591 aa).

Residue E175 coordinates L-aspartate. Positions 199–202 (QQFK) are aspartate. L-aspartate-binding residues include R221 and H453. 221 to 223 (RDE) lines the ATP pocket. E486 is a binding site for ATP. R493 provides a ligand contact to L-aspartate. Position 538-541 (538-541 (GIDR)) interacts with ATP.

Belongs to the class-II aminoacyl-tRNA synthetase family. Type 1 subfamily. As to quaternary structure, homodimer.

Its subcellular location is the cytoplasm. It carries out the reaction tRNA(Asx) + L-aspartate + ATP = L-aspartyl-tRNA(Asx) + AMP + diphosphate. Functionally, aspartyl-tRNA synthetase with relaxed tRNA specificity since it is able to aspartylate not only its cognate tRNA(Asp) but also tRNA(Asn). Reaction proceeds in two steps: L-aspartate is first activated by ATP to form Asp-AMP and then transferred to the acceptor end of tRNA(Asp/Asn). The chain is Aspartate--tRNA(Asp/Asn) ligase from Cereibacter sphaeroides (strain KD131 / KCTC 12085) (Rhodobacter sphaeroides).